The following is a 149-amino-acid chain: Protein GR6 (149 aa).

In terms of tissue distribution, expressed in fetus (aged from 7 to 8 weeks). Weakly expressed in lymphocytes.

The protein is Protein GR6 of Homo sapiens (Human).